We begin with the raw amino-acid sequence, 199 residues long: Peptidyl-tRNA hydrolase (199 aa).

Tyr-15 contributes to the tRNA binding site. Residue His-20 is the Proton acceptor of the active site. Residues Tyr-66, Asn-68, and Asn-114 each contribute to the tRNA site.

The protein belongs to the PTH family. In terms of assembly, monomer.

It is found in the cytoplasm. It carries out the reaction an N-acyl-L-alpha-aminoacyl-tRNA + H2O = an N-acyl-L-amino acid + a tRNA + H(+). Functionally, hydrolyzes ribosome-free peptidyl-tRNAs (with 1 or more amino acids incorporated), which drop off the ribosome during protein synthesis, or as a result of ribosome stalling. In terms of biological role, catalyzes the release of premature peptidyl moieties from peptidyl-tRNA molecules trapped in stalled 50S ribosomal subunits, and thus maintains levels of free tRNAs and 50S ribosomes. In Burkholderia ambifaria (strain MC40-6), this protein is Peptidyl-tRNA hydrolase.